Here is a 196-residue protein sequence, read N- to C-terminus: ATP-dependent Clp protease proteolytic subunit (196 aa).

S96 acts as the Nucleophile in catalysis. H121 is an active-site residue.

It belongs to the peptidase S14 family. Fourteen ClpP subunits assemble into 2 heptameric rings which stack back to back to give a disk-like structure with a central cavity, resembling the structure of eukaryotic proteasomes.

It is found in the cytoplasm. The enzyme catalyses Hydrolysis of proteins to small peptides in the presence of ATP and magnesium. alpha-casein is the usual test substrate. In the absence of ATP, only oligopeptides shorter than five residues are hydrolyzed (such as succinyl-Leu-Tyr-|-NHMec, and Leu-Tyr-Leu-|-Tyr-Trp, in which cleavage of the -Tyr-|-Leu- and -Tyr-|-Trp bonds also occurs).. Functionally, cleaves peptides in various proteins in a process that requires ATP hydrolysis. Has a chymotrypsin-like activity. Plays a major role in the degradation of misfolded proteins. The polypeptide is ATP-dependent Clp protease proteolytic subunit (Streptococcus pneumoniae (strain ATCC 700669 / Spain 23F-1)).